The following is a 222-amino-acid chain: Orotate phosphoribosyltransferase (222 aa).

K29 contacts 5-phospho-alpha-D-ribose 1-diphosphate. 37 to 38 contacts orotate; sequence FF. 5-phospho-alpha-D-ribose 1-diphosphate contacts are provided by residues 75–76, R101, K102, K105, H107, and 126–134; these read YK and DDVISAGTS. Orotate-binding residues include S130 and R158.

It belongs to the purine/pyrimidine phosphoribosyltransferase family. PyrE subfamily. In terms of assembly, homodimer. Mg(2+) is required as a cofactor.

The catalysed reaction is orotidine 5'-phosphate + diphosphate = orotate + 5-phospho-alpha-D-ribose 1-diphosphate. The protein operates within pyrimidine metabolism; UMP biosynthesis via de novo pathway; UMP from orotate: step 1/2. Catalyzes the transfer of a ribosyl phosphate group from 5-phosphoribose 1-diphosphate to orotate, leading to the formation of orotidine monophosphate (OMP). The chain is Orotate phosphoribosyltransferase from Polynucleobacter asymbioticus (strain DSM 18221 / CIP 109841 / QLW-P1DMWA-1) (Polynucleobacter necessarius subsp. asymbioticus).